The following is an 839-amino-acid chain: Toll-like receptor 4 (839 aa).

Residues methionine 1–proline 23 form the signal peptide. Residues glutamate 24–lysine 631 are Extracellular-facing. Cysteine 29 and cysteine 40 are oxidised to a cystine. An N-linked (GlcNAc...) asparagine glycan is attached at asparagine 35. LRR repeat units lie at residues serine 55 to serine 76, glutamate 79 to serine 100, histidine 103 to glycine 124, serine 127 to histidine 148, and threonine 151 to serine 172. Residue asparagine 173 is glycosylated (N-linked (GlcNAc...) asparagine). LRR repeat units follow at residues asparagine 176–histidine 199, asparagine 205–glutamate 225, and arginine 227–isoleucine 247. Asparagine 205 carries N-linked (GlcNAc...) asparagine glycosylation. A disulfide bridge links cysteine 281 with cysteine 306. Residues asparagine 282 and asparagine 309 are each glycosylated (N-linked (GlcNAc...) asparagine). LRR repeat units follow at residues glycine 331–lysine 351, serine 352–proline 373, serine 374–serine 394, serine 400–glutamate 422, glutamine 423–leucine 444, asparagine 448–histidine 456, serine 472–leucine 495, asparagine 497–serine 518, serine 521–cysteine 542, and serine 545–glutamine 565. A disulfide bridge links cysteine 390 with cysteine 391. Residues asparagine 497 and asparagine 526 are each glycosylated (N-linked (GlcNAc...) asparagine). N-linked (GlcNAc...) asparagine glycosylation is present at asparagine 575. The 51-residue stretch at asparagine 579–methionine 629 folds into the LRRCT domain. 2 disulfides stabilise this stretch: cysteine 583–cysteine 609 and cysteine 585–cysteine 627. Asparagine 624 and asparagine 630 each carry an N-linked (GlcNAc...) asparagine glycan. Residues threonine 632–tyrosine 652 form a helical membrane-spanning segment. The Cytoplasmic portion of the chain corresponds to lysine 653–isoleucine 839. The 144-residue stretch at asparagine 672 to leucine 815 folds into the TIR domain.

It belongs to the Toll-like receptor family. As to quaternary structure, belongs to the lipopolysaccharide (LPS) receptor, a multi-protein complex containing at least CD14, LY96 and TLR4. Binding to bacterial LPS leads to homodimerization. Interacts with LY96 via the extracellular domain. Interacts with MYD88. Interacts (via TIR domains) with TIRAP. Interacts with TICAM2. Interacts with NOX4. Interacts with CNPY3. Interacts with HSP90B1. The interaction with both CNPY3 and HSP90B1 is required for proper folding in the endoplasmic reticulum. Interacts with MAP3K21; this interaction leads to negative regulation of TLR4 signaling. Interacts with CD36, following CD36 stimulation by oxLDL or amyloid-beta 42, and forms a heterodimer with TLR6. The trimeric complex is internalized and triggers inflammatory response. LYN kinase activity facilitates TLR4-TLR6 heterodimerization and signal initiation. Interacts with TICAM1 in response to LPS in a WDFY1-dependent manner. Interacts with WDFY1 in response to LPS. Interacts with SMPDL3B. Interacts with CEACAM1; upon lipopolysaccharide stimulation, forms a complex including TLR4 and the phosphorylated form of SYK and CEACAM1, which in turn, recruits PTPN6 that dephosphorylates SYK, reducing the production of reactive oxygen species (ROS) and lysosome disruption, which in turn, reduces the activity of the inflammasome. Interacts with RFTN1; the interaction occurs in response to lipopolysaccharide stimulation. Interacts with SCIMP; the interaction occurs in response to lipopolysaccharide stimulation and is enhanced by phosphorylation of SCIMP by LYN. This interaction facilitates the phosphorylation of TLR4 by LYN which elicits a selective cytokine response in macrophages. Interacts with TRAF3IP3. Interacts with TREM1; this interaction enhances TLR4-mediated inflammatory response. Interacts with ZG16B/PAUF. Interacts with CD82; this interaction inhibits TLR4-mediated signaling pathway. Interacts with neutrophil recruitment protein from Aedes aegypti saliva; the interaction probably promotes activation of canonical NF-kappa-B signaling in skin-resident macrophages and subsequent expression of neutrophil chemoattractants. (Microbial infection) In case of infection, interacts with uropathogenic E.coli protein TcpC. In terms of assembly, (Microbial infection) In case of infection, interacts with B.melitensis protein TcpB; TcpB abolishes the TLR4-TIRAP interaction in vitro. As to quaternary structure, (Microbial infection) Interacts with ebolavirus protein GP; this interaction leads to the production of proinflammatory cytokines and suppressor of cytokine signaling 1/SOCS1. In terms of processing, N-Glycosylation of Asn-526 and Asn-575 by STT3A-containing OST-A complex is necessary for the expression of TLR4 on the cell surface and the LPS-response. Likewise, mutants lacking two or more of the other N-glycosylation sites were deficient in interaction with LPS. Post-translationally, phosphorylated on tyrosine residues by LYN after binding lipopolysaccharide. Ubiquitinated by RNF128 via 'Lys-28'-linked polyubiquitin chains, leading to proteasomal degradation. Highly expressed in placenta, spleen and peripheral blood leukocytes. Detected in monocytes, macrophages, dendritic cells and several types of T-cells. Expressed in pancreatic cancer cells but not in normal pancreatic cells (at protein level).

The protein resides in the cell membrane. It localises to the early endosome. Its subcellular location is the cell projection. The protein localises to the ruffle. Transmembrane receptor that functions as a pattern recognition receptor recognizing pathogen- and damage-associated molecular patterns (PAMPs and DAMPs) to induce innate immune responses via downstream signaling pathways. At the plasma membrane, cooperates with LY96 to mediate the innate immune response to bacterial lipopolysaccharide (LPS). Also involved in LPS-independent inflammatory responses triggered by free fatty acids, such as palmitate, and Ni(2+). Mechanistically, acts via MYD88, TIRAP and TRAF6, leading to NF-kappa-B activation, cytokine secretion and the inflammatory response. Alternatively, CD14-mediated TLR4 internalization via endocytosis is associated with the initiation of a MYD88-independent signaling via the TICAM1-TBK1-IRF3 axis leading to type I interferon production. In addition to the secretion of proinflammatory cytokines, initiates the activation of NLRP3 inflammasome and formation of a positive feedback loop between autophagy and NF-kappa-B signaling cascade. In complex with TLR6, promotes inflammation in monocytes/macrophages by associating with TLR6 and the receptor CD86. Upon ligand binding, such as oxLDL or amyloid-beta 42, the TLR4:TLR6 complex is internalized and triggers inflammatory response, leading to NF-kappa-B-dependent production of CXCL1, CXCL2 and CCL9 cytokines, via MYD88 signaling pathway, and CCL5 cytokine, via TICAM1 signaling pathway. In myeloid dendritic cells, vesicular stomatitis virus glycoprotein G but not LPS promotes the activation of IRF7, leading to type I IFN production in a CD14-dependent manner. Required for the migration-promoting effects of ZG16B/PAUF on pancreatic cancer cells. This is Toll-like receptor 4 (TLR4) from Homo sapiens (Human).